Consider the following 143-residue polypeptide: SsrA-binding protein (143 aa).

This sequence belongs to the SmpB family.

The protein localises to the cytoplasm. In terms of biological role, required for rescue of stalled ribosomes mediated by trans-translation. Binds to transfer-messenger RNA (tmRNA), required for stable association of tmRNA with ribosomes. tmRNA and SmpB together mimic tRNA shape, replacing the anticodon stem-loop with SmpB. tmRNA is encoded by the ssrA gene; the 2 termini fold to resemble tRNA(Ala) and it encodes a 'tag peptide', a short internal open reading frame. During trans-translation Ala-aminoacylated tmRNA acts like a tRNA, entering the A-site of stalled ribosomes, displacing the stalled mRNA. The ribosome then switches to translate the ORF on the tmRNA; the nascent peptide is terminated with the 'tag peptide' encoded by the tmRNA and targeted for degradation. The ribosome is freed to recommence translation, which seems to be the essential function of trans-translation. This chain is SsrA-binding protein, found in Mycoplasmopsis synoviae (strain 53) (Mycoplasma synoviae).